A 634-amino-acid polypeptide reads, in one-letter code: Chaperone protein dnaK2 (634 aa).

Position 197 is a phosphothreonine; by autocatalysis (T197). Residues 592–634 (IGSSVYQQPGNQPPAPGTPDSNESNDKGGDDDVIDADFTETKD) form a disordered region. The segment covering 622–634 (DDVIDADFTETKD) has biased composition (acidic residues).

Belongs to the heat shock protein 70 family.

Functionally, acts as a chaperone. This chain is Chaperone protein dnaK2 (dnaK2), found in Prochlorococcus marinus subsp. pastoris (strain CCMP1986 / NIES-2087 / MED4).